The chain runs to 239 residues: THAP domain-containing protein 3 (239 aa).

The THAP-type zinc-finger motif lies at 1–82; sequence MPKSCAARQC…LKHNAVPTVF (82 aa). The segment at 84–177 is disordered; the sequence is FQDPTQQVRE…RRTPNKQPSD (94 aa). A Phosphoserine modification is found at Ser-122. The HCFC1-binding motif (HBM) signature appears at 177 to 180; it reads DHSY.

In terms of assembly, component of a THAP1/THAP3-HCFC1-OGT complex that contains at least, either THAP1 or THAP3, HCFC1 and OGT. Interacts directly with OGT and HCFC1 (via its HBM). Highly expressed in heart, skeletal muscle and placenta. Weaker expression in brain, kidney and liver.

Its function is as follows. Component of a THAP1/THAP3-HCFC1-OGT complex that is required for the regulation of the transcriptional activity of RRM1. This Homo sapiens (Human) protein is THAP domain-containing protein 3 (THAP3).